We begin with the raw amino-acid sequence, 58 residues long: Cyclotide trypsin inhibitor TopI1 (58 aa).

Positions 1–23 (MKFIIVLLLLTALTLTSIPVIEG) are cleaved as a signal peptide. Positions 24–55 (ILKRCKTYDDCKDVCKARKGKCEFGICKCMIK) form a cross-link, cyclopeptide (Ile-Lys). Intrachain disulfides connect Cys-28–Cys-45, Cys-34–Cys-50, and Cys-38–Cys-52. Ser-56 is subject to Serine amide.

In terms of processing, this is a cyclic peptide. As to expression, expressed by the venom gland.

The protein localises to the secreted. In terms of biological role, first cyclic scorpion trypsin inhibitor (Kd~0.5 nM). Does not inhibit chymotrypsin. This chain is Cyclotide trypsin inhibitor TopI1, found in Tityus obscurus (Amazonian scorpion).